A 96-amino-acid polypeptide reads, in one-letter code: Co-chaperonin GroES (96 aa).

It belongs to the GroES chaperonin family. In terms of assembly, heptamer of 7 subunits arranged in a ring. Interacts with the chaperonin GroEL.

It localises to the cytoplasm. Together with the chaperonin GroEL, plays an essential role in assisting protein folding. The GroEL-GroES system forms a nano-cage that allows encapsulation of the non-native substrate proteins and provides a physical environment optimized to promote and accelerate protein folding. GroES binds to the apical surface of the GroEL ring, thereby capping the opening of the GroEL channel. In Tremblaya princeps, this protein is Co-chaperonin GroES.